A 226-amino-acid polypeptide reads, in one-letter code: Phosphoribosylformylglycinamidine synthase subunit PurQ (226 aa).

One can recognise a Glutamine amidotransferase type-1 domain in the interval 2 to 226; that stretch reads KFAVIQFPGS…LKNFLVTVKN (225 aa). Cysteine 86 serves as the catalytic Nucleophile. Active-site residues include histidine 195 and glutamate 197.

In terms of assembly, part of the FGAM synthase complex composed of 1 PurL, 1 PurQ and 2 PurS subunits.

Its subcellular location is the cytoplasm. It catalyses the reaction N(2)-formyl-N(1)-(5-phospho-beta-D-ribosyl)glycinamide + L-glutamine + ATP + H2O = 2-formamido-N(1)-(5-O-phospho-beta-D-ribosyl)acetamidine + L-glutamate + ADP + phosphate + H(+). The enzyme catalyses L-glutamine + H2O = L-glutamate + NH4(+). Its pathway is purine metabolism; IMP biosynthesis via de novo pathway; 5-amino-1-(5-phospho-D-ribosyl)imidazole from N(2)-formyl-N(1)-(5-phospho-D-ribosyl)glycinamide: step 1/2. Functionally, part of the phosphoribosylformylglycinamidine synthase complex involved in the purines biosynthetic pathway. Catalyzes the ATP-dependent conversion of formylglycinamide ribonucleotide (FGAR) and glutamine to yield formylglycinamidine ribonucleotide (FGAM) and glutamate. The FGAM synthase complex is composed of three subunits. PurQ produces an ammonia molecule by converting glutamine to glutamate. PurL transfers the ammonia molecule to FGAR to form FGAM in an ATP-dependent manner. PurS interacts with PurQ and PurL and is thought to assist in the transfer of the ammonia molecule from PurQ to PurL. This Lactococcus lactis subsp. cremoris (Streptococcus cremoris) protein is Phosphoribosylformylglycinamidine synthase subunit PurQ.